The sequence spans 261 residues: Probable septum site-determining protein MinC (261 aa).

This sequence belongs to the MinC family. As to quaternary structure, interacts with MinD and FtsZ.

Functionally, cell division inhibitor that blocks the formation of polar Z ring septums. Rapidly oscillates between the poles of the cell to destabilize FtsZ filaments that have formed before they mature into polar Z rings. Prevents FtsZ polymerization. The protein is Probable septum site-determining protein MinC of Burkholderia cenocepacia (strain ATCC BAA-245 / DSM 16553 / LMG 16656 / NCTC 13227 / J2315 / CF5610) (Burkholderia cepacia (strain J2315)).